Reading from the N-terminus, the 501-residue chain is Suppressor of hairless protein homolog (501 aa).

DNA-binding stretches follow at residues 58–68 (QKSYGNEKRFF), 166–171 (SKPSKK), and 193–198 (RLRSQT). The IPT/TIG domain occupies 356–446 (PVVESLQLNG…YSTSLTFTYT (91 aa)).

This sequence belongs to the Su(H) family. In terms of assembly, interacts with activated Notch proteins. Forms a ternary complex with nrarp and the intracellular domain (NICD) of notch1. Interacts with rita1, leading to nuclear export, prevent the interaction between rbpj and NICD product and subsequent down-regulation of the Notch signaling pathway.

The protein localises to the nucleus. The protein resides in the cytoplasm. Its function is as follows. Transcriptional regulator that plays a central role in Notch signaling, a signaling pathway involved in cell-cell communication that regulates a broad spectrum of cell-fate determinations. Acts as a transcriptional repressor when it is not associated with Notch proteins. When associated with some NICD product of Notch proteins (Notch intracellular domain), it acts as a transcriptional activator that activates transcription of Notch target genes. Required for the transcriptional activation of ESR1, suggesting that it is required during primary neurogenesis in embryos. Binds to the oxygen responsive element of COX4I2 and activates its transcription under hypoxia conditions (4% oxygen). The protein is Suppressor of hairless protein homolog (rbpj) of Xenopus laevis (African clawed frog).